Reading from the N-terminus, the 893-residue chain is Zinc finger protein 281 (893 aa).

Disordered regions lie at residues 1-113 (MKIG…FPSQ), 126-148 (IKQEKPADPEEQPSHHHHHHHHY), 153-172 (AGAEERSPGLGGGEGGSHGV), and 198-251 (SGSR…GAVL). Lys2 participates in a covalent cross-link: Glycyl lysine isopeptide (Lys-Gly) (interchain with G-Cter in SUMO2). Residues 7-36 (FLSGGGGPSSSGGSGSGGSSGSASGGSGGG) show a composition bias toward gly residues. Residues Lys100 and Lys127 each participate in a glycyl lysine isopeptide (Lys-Gly) (interchain with G-Cter in SUMO2) cross-link. A compositionally biased stretch (basic and acidic residues) spans 127-139 (KQEKPADPEEQPS). Residues 161-170 (GLGGGEGGSH) show a composition bias toward gly residues. Residues 201–216 (RTDEHGNQEPKQDANV) show a composition bias toward basic and acidic residues. Residues Lys211, Lys217, Lys223, Lys230, Lys240, and Lys256 each participate in a glycyl lysine isopeptide (Lys-Gly) (interchain with G-Cter in SUMO2) cross-link. 3 C2H2-type zinc fingers span residues 258 to 280 (HICDHCSAAFRSSYHLRRHVLIH), 286 to 308 (FQCSQCSMGFIQKYLLQRHEKIH), and 314 to 336 (FGCDQCSMKFIQKYHMERHKRTH). Residues Lys298 and Lys322 each participate in a glycyl lysine isopeptide (Lys-Gly) (interchain with G-Cter in SUMO2) cross-link. The C2H2-type 4; atypical zinc finger occupies 342-364 (YKCDTCQQYFSRTDRLLKHRRTC). Lys370 is covalently cross-linked (Glycyl lysine isopeptide (Lys-Gly) (interchain with G-Cter in SUMO2)). Positions 371–425 (GAASAEPGSSNHNSMGNLAVLSQGNTSSSRRKSKSKSIAIENKEHKTGKTNESQM) are disordered. The span at 377-396 (PGSSNHNSMGNLAVLSQGNT) shows a compositional bias: polar residues. Ser392 carries the post-translational modification Phosphoserine. Glycyl lysine isopeptide (Lys-Gly) (interchain with G-Cter in SUMO2) cross-links involve residues Lys406, Lys413, Lys457, and Lys474. Ser481 is modified (phosphoserine). Glycyl lysine isopeptide (Lys-Gly) (interchain with G-Cter in SUMO2) cross-links involve residues Lys490, Lys495, Lys536, Lys596, Lys614, and Lys619. Residues 613 to 658 (GKSETQKEDPFNLTEPRVDLHTSGEHSELVQEENLSPGTQTPSNDK) form a disordered region. Positions 616-641 (ETQKEDPFNLTEPRVDLHTSGEHSEL) are enriched in basic and acidic residues. Positions 645-658 (ENLSPGTQTPSNDK) are enriched in polar residues. Position 648 is a phosphoserine (Ser648). Residues Lys658 and Lys667 each participate in a glycyl lysine isopeptide (Lys-Gly) (interchain with G-Cter in SUMO2) cross-link. Positions 775–813 (SSAFQSSSQKLTSQKEQQKNLESSTSFQIPSQELASQID) are enriched in polar residues. Residues 775 to 815 (SSAFQSSSQKLTSQKEQQKNLESSTSFQIPSQELASQIDPQ) form a disordered region. A Phosphoserine modification is found at Ser782. Residues Lys784, Lys789, and Lys793 each participate in a glycyl lysine isopeptide (Lys-Gly) (interchain with G-Cter in SUMO2) cross-link. Ser805 carries the post-translational modification Phosphoserine. Residues Lys816 and Lys838 each participate in a glycyl lysine isopeptide (Lys-Gly) (interchain with G-Cter in SUMO2) cross-link. Residue Thr886 is modified to Phosphothreonine.

The protein belongs to the krueppel C2H2-type zinc-finger protein family. As to quaternary structure, interacts with NANOG. Associates with the NuRD complex.

It is found in the nucleus. Transcription repressor that plays a role in regulation of embryonic stem cells (ESCs) differentiation. Required for ESCs differentiation and acts by mediating autorepression of NANOG in ESCs: binds to the NANOG promoter and promotes association of NANOG protein to its own promoter and recruits the NuRD complex, which deacetylates histones. Not required for establishement and maintenance of ESCs. Represses the transcription of a number of genes including GAST, ODC1 and VIM. Binds to the G-rich box in the enhancer region of these genes. The polypeptide is Zinc finger protein 281 (Znf281) (Mus musculus (Mouse)).